The sequence spans 145 residues: Large ribosomal subunit protein uL11 (145 aa).

Belongs to the universal ribosomal protein uL11 family. In terms of assembly, part of the ribosomal stalk of the 50S ribosomal subunit. Interacts with L10 and the large rRNA to form the base of the stalk. L10 forms an elongated spine to which L12 dimers bind in a sequential fashion forming a multimeric L10(L12)X complex. In terms of processing, one or more lysine residues are methylated.

Functionally, forms part of the ribosomal stalk which helps the ribosome interact with GTP-bound translation factors. This chain is Large ribosomal subunit protein uL11, found in Francisella philomiragia subsp. philomiragia (strain ATCC 25017 / CCUG 19701 / FSC 153 / O#319-036).